Here is a 259-residue protein sequence, read N- to C-terminus: tRNA pseudouridine synthase A (259 aa).

Residue aspartate 50 is the Nucleophile of the active site. Tyrosine 101 serves as a coordination point for substrate.

The protein belongs to the tRNA pseudouridine synthase TruA family.

The enzyme catalyses uridine(38/39/40) in tRNA = pseudouridine(38/39/40) in tRNA. In terms of biological role, formation of pseudouridine at positions 38, 39 and 40 in the anticodon stem and loop of transfer RNAs. This Methanocaldococcus jannaschii (strain ATCC 43067 / DSM 2661 / JAL-1 / JCM 10045 / NBRC 100440) (Methanococcus jannaschii) protein is tRNA pseudouridine synthase A.